A 150-amino-acid polypeptide reads, in one-letter code: Ribonuclease pancreatic delta-type (150 aa).

The signal sequence occupies residues 1–25 (MGLEKSFILFSLLVLVLGWVQPSLG). Arg-35 provides a ligand contact to substrate. Residue His-37 is the Proton acceptor of the active site. Disulfide bonds link Cys-51/Cys-110, Cys-65/Cys-121, Cys-83/Cys-136, and Cys-90/Cys-98. Substrate contacts are provided by residues 66–70 (KPVNT) and Lys-91. Catalysis depends on His-145, which acts as the Proton donor.

Belongs to the pancreatic ribonuclease family. Monomer.

The protein localises to the secreted. The catalysed reaction is an [RNA] containing cytidine + H2O = an [RNA]-3'-cytidine-3'-phosphate + a 5'-hydroxy-ribonucleotide-3'-[RNA].. The enzyme catalyses an [RNA] containing uridine + H2O = an [RNA]-3'-uridine-3'-phosphate + a 5'-hydroxy-ribonucleotide-3'-[RNA].. Functionally, endonuclease that catalyzes the cleavage of RNA on the 3' side of pyrimidine nucleotides. Acts on single-stranded and double-stranded RNA. The sequence is that of Ribonuclease pancreatic delta-type from Rattus tiomanicus (Malayan field rat).